Here is a 466-residue protein sequence, read N- to C-terminus: Hydroxyacid-oxoacid transhydrogenase, mitochondrial (466 aa).

Residue Lys444 is modified to N6-acetyllysine. Ser451 is subject to Phosphoserine.

The protein belongs to the iron-containing alcohol dehydrogenase family. Hydroxyacid-oxoacid transhydrogenase subfamily.

Its subcellular location is the mitochondrion. The catalysed reaction is (S)-3-hydroxybutanoate + 2-oxoglutarate = (R)-2-hydroxyglutarate + acetoacetate. It carries out the reaction 4-hydroxybutanoate + 2-oxoglutarate = (R)-2-hydroxyglutarate + succinate semialdehyde. Its function is as follows. Catalyzes the cofactor-independent reversible oxidation of gamma-hydroxybutyrate (GHB) to succinic semialdehyde (SSA) coupled to reduction of 2-ketoglutarate (2-KG) to D-2-hydroxyglutarate (D-2-HG). L-3-hydroxybutyrate (L-3-OHB) is also a substrate for HOT when using 2-KG as hydrogen acceptor, resulting in the formation of D-2-HG. This is Hydroxyacid-oxoacid transhydrogenase, mitochondrial (ADHFE1) from Bos taurus (Bovine).